The primary structure comprises 578 residues: Probable arginine--tRNA ligase, mitochondrial (578 aa).

The transit peptide at 1-16 directs the protein to the mitochondrion; the sequence is MACGFRRSIACQLSRV. L-arginine contacts are provided by residues 133 to 135, His144, Tyr322, Asp326, and Gln350; that span reads SPN. The 'HIGH' region motif lies at 133–144; the sequence is SPNIAKKFHVGH. Lys568 is subject to N6-acetyllysine.

Belongs to the class-I aminoacyl-tRNA synthetase family.

It is found in the mitochondrion membrane. It catalyses the reaction tRNA(Arg) + L-arginine + ATP = L-arginyl-tRNA(Arg) + AMP + diphosphate. In terms of biological role, catalyzes the attachment of arginine to tRNA(Arg) in a two-step reaction: arginine is first activated by ATP to form Arg-AMP and then transferred to the acceptor end of tRNA(Arg). This chain is Probable arginine--tRNA ligase, mitochondrial (Rars2), found in Mus musculus (Mouse).